The sequence spans 77 residues: UPF0349 protein lmo2392 (77 aa).

This sequence belongs to the UPF0349 family.

The sequence is that of UPF0349 protein lmo2392 from Listeria monocytogenes serovar 1/2a (strain ATCC BAA-679 / EGD-e).